Reading from the N-terminus, the 157-residue chain is Protein Smg homolog (157 aa).

The protein belongs to the Smg family.

The chain is Protein Smg homolog from Shewanella putrefaciens (strain CN-32 / ATCC BAA-453).